The sequence spans 381 residues: Opsin Rh2 (381 aa).

Residues 1-56 (MERSLLPEPPLAMALLGPRFEAQTGGNRSVLDNVLPDMAPLVNPYWSRFAPMDPTM) are Extracellular-facing. A glycan (N-linked (GlcNAc...) asparagine) is linked at N27. A helical membrane pass occupies residues 57 to 81 (SKILGLFTLVILIISCCGNGVVVYI). Residues 82–93 (FGGTKSLRTPAN) lie on the Cytoplasmic side of the membrane. The chain crosses the membrane as a helical span at residues 94-119 (LLVLNLAFSDFCMMASQSPVMIINFY). Over 120–133 (YETWVLGPLWCDIY) the chain is Extracellular. C130 and C207 are oxidised to a cystine. The helical transmembrane segment at 134 to 153 (AACGSLFGCVSIWSMCMIAF) threads the bilayer. Over 154–172 (DRYNVIVKGINGTPMTIKT) the chain is Cytoplasmic. Residues 173 to 196 (SIMKIAFIWMMAVFWTIMPLIGWS) traverse the membrane as a helical segment. The Extracellular portion of the chain corresponds to 197–220 (SYVPEGNLTACSIDYMTRQWNPRS). Residues 221–248 (YLITYSLFVYYTPLFMICYSYWFIIATV) form a helical membrane-spanning segment. Residues 249 to 283 (AAHEKAMRDQAKKMNVKSLRSSEDCDKSAENKLAK) lie on the Cytoplasmic side of the membrane. A helical transmembrane segment spans residues 284–307 (VALTTISLWFMAWTPYLIICYFGL). Residues 308 to 314 (FKIDGLT) lie on the Extracellular side of the membrane. The chain crosses the membrane as a helical span at residues 315-339 (PLTTIWGATFAKTSAVYNPIVYGIS). Position 326 is an N6-(retinylidene)lysine (K326). The Cytoplasmic segment spans residues 340–381 (HPKYRLVLKEKCPMCVCGSTDEPKPDAPPSDTETTSEAESKA). The interval 358–381 (STDEPKPDAPPSDTETTSEAESKA) is disordered. The span at 370–381 (DTETTSEAESKA) shows a compositional bias: polar residues.

Belongs to the G-protein coupled receptor 1 family. Opsin subfamily. In terms of processing, some or all of the Ser/Thr residues present in the C-terminal part may be phosphorylated.

The protein localises to the membrane. Its function is as follows. Visual pigments are the light-absorbing molecules that mediate vision. They consist of an apoprotein, opsin, covalently linked to cis-retinal. The chain is Opsin Rh2 (Rh2) from Drosophila pseudoobscura pseudoobscura (Fruit fly).